A 637-amino-acid chain; its full sequence is MVDYIVEYDYDAVHDDELTIRVGEIIRNVKKLQEEGWLEGELNGRRGMFPDNFVKEIKRETEPKDDNLPIKRERQGNVASLVQRISTYGLPAGGIQPHPQTKAIKKKTKKRQCKVLFDYSPQNEDELELIVGDVIDVIEEVEEGWWSGTLNNKLGLFPSNFVKELESTEDGETHNAQEESEVPLTGPTSPLPSPGNGSEPAPGSVAQPKKIRGIGFGDIFKEGSVKLRTRTSSSETEEKKTEKPLILQPLGSRTQNVEVTKPDVDGKIKAKEYCRTLFPYTGTNEDELTFREGEIIHLISKETGEAGWWKGELNGKEGVFPDNFAVQISELDKDFPKPKKPPPPAKGPAPKPDLSAAEKKAFPLKAEEKDEKSLLEQKPSKPAAPQVPPKKPTAPTKASNLLRSPGAVYPKRPEKPVPPPPPAAKINGEVSIISSKIDTEPVSKPKLDPEQLPVRPKSVDLDAFVARNSKETDDVNFDDIASSENLLHLTANRPKMPGRRLPGRFNGGHSPTQSPEKTLKLPKEDDSGNLKPLEFKKDASYSSKSSLSTPSSASKVNTAAFLTPLELKAKAEADDGKRNSVDELRAQIIELLCIVDALKKDHGKELEKLRKELEEEKAMRSNLEVEIAKLKKAVLLS.

Positions 1–59 constitute an SH3 1; truncated domain; sequence MVDYIVEYDYDAVHDDELTIRVGEIIRNVKKLQEEGWLEGELNGRRGMFPDNFVKEIKR. The interval 1–175 is interaction with ANLN and localization to the midbody; that stretch reads MVDYIVEYDY…ESTEDGETHN (175 aa). K58 is covalently cross-linked (Glycyl lysine isopeptide (Lys-Gly) (interchain with G-Cter in SUMO2)). Phosphoserine is present on residues S80 and S86. Residues 108–167 form the SH3 2 domain; the sequence is TKKRQCKVLFDYSPQNEDELELIVGDVIDVIEEVEEGWWSGTLNNKLGLFPSNFVKELES. Residues 166 to 177 are compositionally biased toward basic and acidic residues; it reads ESTEDGETHNAQ. A disordered region spans residues 166–209; sequence ESTEDGETHNAQEESEVPLTGPTSPLPSPGNGSEPAPGSVAQPK. Position 224 is a phosphoserine (S224). Residues 226–254 are disordered; the sequence is KLRTRTSSSETEEKKTEKPLILQPLGSRT. The SH3 3 domain maps to 269–330; sequence KAKEYCRTLF…PDNFAVQISE (62 aa). The segment at 333–455 is disordered; that stretch reads KDFPKPKKPP…KLDPEQLPVR (123 aa). 3 short sequence motifs (SH3-binding) span residues 336–352, 378–397, and 410–422; these read PKPKKPPPPAKGPAPKP, KPSKPAAPQVPPKKPTAPTK, and PKRPEKPVPPPPP. A compositionally biased stretch (pro residues) spans 341-351; the sequence is PPPPAKGPAPK. Residues 356–379 show a composition bias toward basic and acidic residues; sequence AAEKKAFPLKAEEKDEKSLLEQKP. Positions 437–449 are enriched in basic and acidic residues; that stretch reads IDTEPVSKPKLDP. S458, S469, S510, and S514 each carry phosphoserine. Residues 488-555 are disordered; the sequence is HLTANRPKMP…SLSTPSSASK (68 aa). Basic and acidic residues predominate over residues 517-539; the sequence is KTLKLPKEDDSGNLKPLEFKKDA. K523 is covalently cross-linked (Glycyl lysine isopeptide (Lys-Gly) (interchain with G-Cter in SUMO2)). Residues 540–555 show a composition bias toward low complexity; sequence SYSSKSSLSTPSSASK. A Phosphothreonine modification is found at T563. Positions 578 to 636 form a coiled coil; that stretch reads RNSVDELRAQIIELLCIVDALKKDHGKELEKLRKELEEEKAMRSNLEVEIAKLKKAVLL. The residue at position 580 (S580) is a Phosphoserine.

In terms of assembly, homodimer. Interacts with F-actin, PKD2, NPHS1 and NPHS2. Interacts with WTIP. Interacts with DDN; interaction is direct. Interacts (via SH3 2 domain) with CBL (via phosphorylated C-terminus). Interacts with BCAR1/p130Cas (via SH3 domain). Interacts with MVB12A and ARHGAP17. Interacts with ANLN, CD2 and CBLB. Interacts with PDCD6IP and TSG101. Interacts with RIN3. Interacts directly with RET (inactive) and CBLC; upon RET activation by GDNF suggested to dissociate from RET as CBLC:CD2AP complex. Interacts with CGNL1 and SH3BP1; probably part of a complex at cell junctions. Interacts with CAPZA1. Post-translationally, phosphorylated on tyrosine residues; probably by c-Abl, Fyn and c-Src. Expressed in podocytes (at protein level).

Its subcellular location is the cytoplasm. The protein localises to the cytoskeleton. The protein resides in the cell projection. It is found in the ruffle. It localises to the cell junction. Seems to act as an adapter protein between membrane proteins and the actin cytoskeleton. In collaboration with CBLC, modulates the rate of RET turnover and may act as regulatory checkpoint that limits the potency of GDNF on neuronal survival. Controls CBLC function, converting it from an inhibitor to a promoter of RET degradation. May play a role in receptor clustering and cytoskeletal polarity in the junction between T-cell and antigen-presenting cell. May anchor the podocyte slit diaphragm to the actin cytoskeleton in renal glomerolus. Also required for cytokinesis. Plays a role in epithelial cell junctions formation. In Mus musculus (Mouse), this protein is CD2-associated protein (Cd2ap).